The chain runs to 261 residues: MSRKPLIAGNWKMNLNHFEAIALVQKIAFSLPDKYYDKVDVTVIPPFTDLRSVQTLVDGDKLRLTYGGQDLSQHDSGAYTGDISGAFLAKLGCSFVVVGHSERRTYHNEDDALVAAKAAAALKHDLTPIVCIGEHLDVREAGNHVAHNVEQLRGSLSGLSAEQISKVVIAYEPVWAIGTGRVAGAADAQEVCAAIRSELGSLASPQIADAVRVLYGGSVNAKNIGELIAQADVDGGLVGGASLDGEQFATLAAIAAGGPLP.

Substrate is bound at residue 10 to 12 (NWK). The Electrophile role is filled by His100. The active-site Proton acceptor is Glu172. Residues Gly178, Ser218, and 239–240 (GG) contribute to the substrate site.

The protein belongs to the triosephosphate isomerase family. In terms of assembly, homodimer.

The protein resides in the cytoplasm. It catalyses the reaction D-glyceraldehyde 3-phosphate = dihydroxyacetone phosphate. Its pathway is carbohydrate biosynthesis; gluconeogenesis. The protein operates within carbohydrate degradation; glycolysis; D-glyceraldehyde 3-phosphate from glycerone phosphate: step 1/1. Involved in the gluconeogenesis. Catalyzes stereospecifically the conversion of dihydroxyacetone phosphate (DHAP) to D-glyceraldehyde-3-phosphate (G3P). In Mycobacterium marinum (strain ATCC BAA-535 / M), this protein is Triosephosphate isomerase.